A 141-amino-acid polypeptide reads, in one-letter code: Nucleoside triphosphatase NudI (141 aa).

A Nudix hydrolase domain is found at 1 to 141 (MRQRTIVCPL…RHTLALKGLL (141 aa)). A Nudix box motif is present at residues 38–59 (GGVEPGERIEEALRREIREELG).

This sequence belongs to the Nudix hydrolase family. NudI subfamily. Monomer. Requires Mg(2+) as cofactor.

It catalyses the reaction a ribonucleoside 5'-triphosphate + H2O = a ribonucleoside 5'-phosphate + diphosphate + H(+). The catalysed reaction is a 2'-deoxyribonucleoside 5'-triphosphate + H2O = a 2'-deoxyribonucleoside 5'-phosphate + diphosphate + H(+). The enzyme catalyses dUTP + H2O = dUMP + diphosphate + H(+). It carries out the reaction dTTP + H2O = dTMP + diphosphate + H(+). It catalyses the reaction dCTP + H2O = dCMP + diphosphate + H(+). Functionally, catalyzes the hydrolysis of nucleoside triphosphates, with a preference for pyrimidine deoxynucleoside triphosphates (dUTP, dTTP and dCTP). The sequence is that of Nucleoside triphosphatase NudI from Salmonella newport (strain SL254).